We begin with the raw amino-acid sequence, 594 residues long: U3 small nucleolar RNA-associated protein 18 (594 aa).

Disordered regions lie at residues 48-128 and 176-200; these read EQEM…WIDS and KWVDDESDSELDDEEDDEEEGSNNV. Composition is skewed to acidic residues over residues 49–72, 102–128, and 180–196; these read QEMDVEDQEDEGSESDNSEEDEAQ, TMDVDDEDDSSSDDYSEDSEEAAWIDS, and DESDSELDDEEDDEEEG. The interval 101–190 is interaction with UTP21; the sequence is DTMDVDDEDD…ESDSELDDEE (90 aa). Phosphoserine occurs at positions 182 and 184. WD repeat units lie at residues 246–285, 290–334, 463–504, 513–554, and 560–593; these read PSHSAIQSLSFHPSKPLLLTGGYDKTLRIYHIDGKTNHLV, LVGS…LTHS, GTTT…TSST, QLTT…VFSN, and TPLGKVTSVAFSPSGGLLAVGNEQGKVRLWKLNH.

It belongs to the WD repeat UTP18 family. As to quaternary structure, interacts with snoRNA U3. Interacts with MPP10, UTP21 and UTP25. Component of the ribosomal small subunit (SSU) processome composed of at least 40 protein subunits and snoRNA U3.

The protein localises to the nucleus. Its subcellular location is the nucleolus. Involved in nucleolar processing of pre-18S ribosomal RNA and ribosome assembly. In Saccharomyces cerevisiae (strain ATCC 204508 / S288c) (Baker's yeast), this protein is U3 small nucleolar RNA-associated protein 18 (UTP18).